We begin with the raw amino-acid sequence, 148 residues long: UPF0251 protein Cbei_2962 (148 aa).

This sequence belongs to the UPF0251 family.

The protein is UPF0251 protein Cbei_2962 of Clostridium beijerinckii (strain ATCC 51743 / NCIMB 8052) (Clostridium acetobutylicum).